The following is a 256-amino-acid chain: Geranylgeranylglyceryl phosphate synthase (256 aa).

2 residues coordinate Mg(2+): aspartate 28 and serine 53. Sn-glycerol 1-phosphate contacts are provided by residues 172–178 (YLEAGSG), 203–204 (GG), and 225–226 (GT).

This sequence belongs to the GGGP/HepGP synthase family. Group II subfamily. The cofactor is Mg(2+).

It localises to the cytoplasm. It catalyses the reaction sn-glycerol 1-phosphate + (2E,6E,10E)-geranylgeranyl diphosphate = sn-3-O-(geranylgeranyl)glycerol 1-phosphate + diphosphate. It functions in the pathway membrane lipid metabolism; glycerophospholipid metabolism. Functionally, prenyltransferase that catalyzes the transfer of the geranylgeranyl moiety of geranylgeranyl diphosphate (GGPP) to the C3 hydroxyl of sn-glycerol-1-phosphate (G1P). This reaction is the first ether-bond-formation step in the biosynthesis of archaeal membrane lipids. The protein is Geranylgeranylglyceryl phosphate synthase of Methanococcus maripaludis (strain DSM 14266 / JCM 13030 / NBRC 101832 / S2 / LL).